The primary structure comprises 553 residues: Dihydrolipoyllysine-residue acetyltransferase component of pyruvate dehydrogenase complex (553 aa).

The Lipoyl-binding 1 domain maps to 2–77 (AFSVQMPALG…EVGGELAVIG (76 aa)). An N6-lipoyllysine modification is found at Lys43. A disordered region spans residues 81 to 125 (DAGEAAAPAPEKVPAAQPESKPAPEPPPVQPTSGAPAGGDAKPVL). The segment covering 84–100 (EAAAPAPEKVPAAQPES) has biased composition (low complexity). A compositionally biased stretch (pro residues) spans 101–110 (KPAPEPPPVQ). The 76-residue stretch at 121–196 (AKPVLMPELG…PVGGELARIG (76 aa)) folds into the Lipoyl-binding 2 domain. At Lys162 the chain carries N6-lipoyllysine. 2 disordered regions span residues 204 to 238 (APAP…AGAA) and 278 to 321 (AAAE…TQKA). Positions 206-232 (APKPAPKPVPEPAPTPKAEPAPSPPAA) are enriched in pro residues. Residues 243-280 (YVTPLVRKLASENNIDLAGVTGTGVGGRIRKQDVLAAA) enclose the Peripheral subunit-binding (PSBD) domain. Over residues 288-300 (APAPAAQAAAAPA) the composition is skewed to low complexity. Active-site residues include His523 and Asp527.

It belongs to the 2-oxoacid dehydrogenase family. In terms of assembly, forms a 24-polypeptide structural core with octahedral symmetry. Part of the PDH complex, consisting of multiple copies of AceE (E1), DlaT (E2) and Lpd (E3). Requires (R)-lipoate as cofactor.

It carries out the reaction N(6)-[(R)-dihydrolipoyl]-L-lysyl-[protein] + acetyl-CoA = N(6)-[(R)-S(8)-acetyldihydrolipoyl]-L-lysyl-[protein] + CoA. Component of the pyruvate dehydrogenase (PDH) complex, that catalyzes the overall conversion of pyruvate to acetyl-CoA and CO(2). This is Dihydrolipoyllysine-residue acetyltransferase component of pyruvate dehydrogenase complex (dlaT) from Mycobacterium bovis (strain ATCC BAA-935 / AF2122/97).